We begin with the raw amino-acid sequence, 133 residues long: MVNDTVADMITRIRNANLVRQTNVQVIASNTTNSIASILKDEGFVEKIQTIETDSGLSSLLITLKYQGKRRKPYITALKRISKPGLRVYANSREIPRVLGGIGIAIISTSKGIMTDRRARHEKVGGEILCYVW.

Belongs to the universal ribosomal protein uS8 family. As to quaternary structure, part of the 30S ribosomal subunit.

It localises to the plastid. It is found in the chloroplast. In terms of biological role, one of the primary rRNA binding proteins, it binds directly to 16S rRNA central domain where it helps coordinate assembly of the platform of the 30S subunit. The protein is Small ribosomal subunit protein uS8c (rps8) of Chlorokybus atmophyticus (Soil alga).